We begin with the raw amino-acid sequence, 983 residues long: MEPQVTLNVTFKNETQSFLVSDPENTTWADVEAMVKVSFDLNTIQIKYLDEENEEISINSQGEYEEALKMANIKQGNQLQMQVHEGCHVVDEVLPQTVVEKQATARTGKKPLAHYSSLVRVLGSDMKTTEEPTAEARSPVPCDTDKPQDKPPDWFTSYLEMFREQVVKETVEKLEQRLQEKLVLQKPPFSSSPSEVSMPISEEETLFLPENQFSWHIACSHCQKRIVGVRYQCSLCPSYNICEDCEAGPYSHDTNHILLKFRRPVVISSEPFFYSKYPTPRLPAALEQVRLQKQVDKNFVKAEKQRLRAEKKQRKAEVKELKKQLKLHRKIHLWNSIHGLQSPKSPLGRPESLLQSNTLMLPLQPCAPVMPTLSAAFVDENLPDGTHLQPGTKFIKHWRMKNTGNVKWSADTKLKFMWGNLTLASTEKKDVLVPCLKAGHIGVVSVEFIAPTLEGTYTLHWRLSHKGQQFGPRVWCSIIVDPFPSSESPVNLERDGISSSKADDFTCEQEEAFLLAEEEIPLGEVTKQTEGTGSSAPQKTQHAASERELYIPSVDLLTAQDLLSFELLDINIVQELERVPHNTPVDVTPRMSPLPHDSPLIEKPGLGRIQEESEGAGLKASPDSTVLTKRKAETPASVEETEEDLSGTQFVCETVIRSLTLDAAPDHNPPCRQRSPQRELQLYSTEEQQPLMLPGFCRKDSSLKFALPEEGPHGDEREEIVHIAEEEAIEEEDVQDEEVQSQSSASSEDYIIILPECFDTSRPLGDSMYSSALSQPGLERGAEGEPGIESGQEPAEARERLPERESQPKEQSISDILTTSQHLDTVPLVPEVAGLPAALSRSAPCGQYEAPRVDSPVTIQEVLPVPDHVRGEPRGSTGLANSRQKSCDHSRHHNGSSIAGGLVKGALSVAASAYKALFSGPPVTAQPVISEDQTAALMAHLFEMGFCDRQLNLRLLRKHNHNILQVVTELLQVNNNDWYSHRY.

The 83-residue stretch at 4–86 folds into the PB1 domain; sequence QVTLNVTFKN…NQLQMQVHEG (83 aa). Ser117 carries the post-translational modification Phosphoserine. Residues 126–149 form a disordered region; sequence MKTTEEPTAEARSPVPCDTDKPQD. Residues 214-266 form a ZZ-type zinc finger; that stretch reads SWHIACSHCQKRIVGVRYQCSLCPSYNICEDCEAGPYSHDTNHILLKFRRPVV. Zn(2+) contacts are provided by Cys219, Cys222, Cys233, Cys236, Cys242, Cys245, His252, and His256. ATG8 family proteins-binding regions lie at residues 544–638 and 745–756; these read ASER…PASV and ASSEDYIIILPE. Phosphothreonine is present on Thr588. Ser592 and Ser598 each carry phosphoserine. Positions 611-645 are disordered; sequence EESEGAGLKASPDSTVLTKRKAETPASVEETEEDL. Residues 768–813 are disordered; it reads MYSSALSQPGLERGAEGEPGIESGQEPAEARERLPERESQPKEQSI. Over residues 795–808 the composition is skewed to basic and acidic residues; sequence AEARERLPERESQP. Phosphoserine is present on Ser855. Residues 867 to 894 are disordered; sequence DHVRGEPRGSTGLANSRQKSCDHSRHHN. In terms of domain architecture, UBA spans 930–974; that stretch reads SEDQTAALMAHLFEMGFCDRQLNLRLLRKHNHNILQVVTELLQVN.

Homooligomer and heterooligomer. Interacts with TRIM55. Interacts with titin/TTN. Interacts with RNF29, USP8, MAP1LC3A, MAP1LC3B, MAP1LC3C, GABARAP, GABARAPL1 and GABARAPL2. Binds to ubiquitin and ubiquitinated proteins. Interacts with SQSTM1. Interacts with TAX1BP1. Interacts with IRF3; this interaction mediates autophagic degradation of IRF3. Interacts with IL12A and IL12B. In terms of processing, phosphorylated by GSK3A; this phosphorylation inhibits NBR1 involvement in the formation of ubiquitinated protein aggregates.

The protein localises to the cytoplasm. The protein resides in the cytoplasmic vesicle. It is found in the autophagosome. Its subcellular location is the lysosome. It localises to the myofibril. The protein localises to the sarcomere. The protein resides in the m line. Ubiquitin-binding autophagy adapter that participates in different processes including host defense or intracellular homeostasis. Possesses a double function during the selective autophagy by acting as a shuttle bringing ubiquitinated proteins to autophagosomes and also by participating in the formation of protein aggregates. Plays a role in the regulation of the innate immune response by modulating type I interferon production and targeting ubiquitinated IRF3 for autophagic degradation. In response to oxidative stress, promotes an increase in SQSTM1 levels, phosphorylation, and body formation by preventing its autophagic degradation. In turn, activates the KEAP1-NRF2/NFE2L2 antioxidant pathway. Also plays non-autophagy role by mediating the shuttle of IL-12 to late endosome for subsequent secretion. In Rattus norvegicus (Rat), this protein is Next to BRCA1 gene 1 protein (Nbr1).